Here is a 363-residue protein sequence, read N- to C-terminus: Strychnine O-methyltransferase (363 aa).

Residues G204, D227, D249, M250, and K263 each contribute to the S-adenosyl-L-methionine site. The active-site Proton acceptor is the H267.

Belongs to the class I-like SAM-binding methyltransferase superfamily. Cation-independent O-methyltransferase family.

The enzyme catalyses 10-hydroxystrychnine + S-adenosyl-L-methionine = beta-colubrine + S-adenosyl-L-homocysteine + H(+). It carries out the reaction 11-demethylbrucine + S-adenosyl-L-methionine = brucine + S-adenosyl-L-homocysteine + H(+). It functions in the pathway alkaloid biosynthesis. Functionally, O-methyltransferase involved in the biosynthesis of curare monoterpene indole alkaloids (MIAs), natural products such as strychnine, a neurotoxic compound used as a pesticide to control rodents, and its pharmacologically active derivatives, including brucine, used to regulate blood pressure. Curare alkaloids act as animal glycine receptor antagonists. Catalyzes the conversion of 10-OH strychnine to beta-colubrine, and of 11-deMe brucine to brucine. In Strychnos nux-vomica (Poison nut), this protein is Strychnine O-methyltransferase.